Consider the following 1307-residue polypeptide: Histone-lysine N-methyltransferase SETDB1 (1307 aa).

The stretch at 30–65 (VEELGISMEELRQYIDEELEKMDCIQQRKKQLAELE) forms a coiled coil. Phosphoserine occurs at positions 112 and 117. Phosphothreonine is present on Thr120. The segment at 127 to 148 (DEDDDVLSIDSGDAGSRTPKDQ) is disordered. Residue Lys182 forms a Glycyl lysine isopeptide (Lys-Gly) (interchain with G-Cter in SUMO2); alternate linkage. A Glycyl lysine isopeptide (Lys-Gly) (interchain with G-Cter in ubiquitin); alternate cross-link involves residue Lys182. 2 Tudor domains span residues 257 to 320 (KLFV…LKKT) and 347 to 403 (LLKS…SMKT). 3 disordered regions span residues 404–424 (SSAS…PNMG), 444–512 (IQFK…TLSE), and 531–570 (SVTS…AFHG). Residues 454–467 (PIAPPAPLPIPPLS) show a composition bias toward pro residues. The span at 476–494 (ESQLAQSRKQVAKKSTSFR) shows a compositional bias: polar residues. Over residues 495–512 (PGSVGSGHSSPTSSTLSE) the composition is skewed to low complexity. The segment covering 539-565 (AAPPVPPVPPGPPTPPGPPAPPGPLAP) has biased composition (pro residues). The 72-residue stretch at 611–682 (YRGKNPLLVP…EMFCLDPYVL (72 aa)) folds into the MBD domain. A Pre-SET domain is found at 744–817 (VGCDCKDGCR…MCTNRLVQHG (74 aa)). Residues Cys746, Cys748, Cys752, Cys758, Cys760, Cys798, Cys802, Cys804, and Cys809 each contribute to the Zn(2+) site. Residues 820 to 1282 (VRLQLFKTQN…AGTELTWDYN (463 aa)) enclose the SET domain. Residues 830-832 (KGW), Asp868, and Tyr870 each bind S-adenosyl-L-methionine. Residue Lys884 forms a Glycyl lysine isopeptide (Lys-Gly) (interchain with G-Cter in ubiquitin) linkage. The segment at 885-1174 (EGYESDVPTS…KNLSGPTKRQ (290 aa)) is disordered. Residues 913-924 (EDPEESNDDSSD) are compositionally biased toward acidic residues. Basic and acidic residues predominate over residues 950 to 966 (GQKENELSEMTSKDSRP). A Phosphoserine modification is found at Ser1042. The span at 1048–1066 (FKDEGDNKQPKKEDPENRN) shows a compositional bias: basic and acidic residues. Lys1049 is covalently cross-linked (Glycyl lysine isopeptide (Lys-Gly) (interchain with G-Cter in SUMO2); alternate). Lys1049 participates in a covalent cross-link: Glycyl lysine isopeptide (Lys-Gly) (interchain with G-Cter in SUMO1); alternate. Glycyl lysine isopeptide (Lys-Gly) (interchain with G-Cter in SUMO2) cross-links involve residues Lys1055 and Lys1085. The span at 1097–1112 (SVLQSQRVVTSTQSNP) shows a compositional bias: polar residues. Residues 1116 to 1131 (LTLSSSTESEGESGTS) are compositionally biased toward low complexity. A compositionally biased stretch (polar residues) spans 1137–1156 (GHTSATAVDSDDIQTISSGS). Lys1165 is covalently cross-linked (Glycyl lysine isopeptide (Lys-Gly) (interchain with G-Cter in SUMO2)). An N6,N6,N6-trimethyllysine; alternate mark is found at Lys1186 and Lys1194. 2 positions are modified to N6,N6-dimethyllysine; alternate: Lys1186 and Lys1194. Residues Arg1236 and 1239 to 1240 (NH) each bind S-adenosyl-L-methionine. Positions 1242, 1295, 1297, and 1302 each coordinate Zn(2+). Residues 1291–1307 (KELLCCCGAIECRGRLL) form the Post-SET domain.

This sequence belongs to the class V-like SAM-binding methyltransferase superfamily. Histone-lysine methyltransferase family. Suvar3-9 subfamily. Part of a complex containing at least CDYL, REST, WIZ, SETDB1, EHMT1 and EHMT2. Forms a complex with ATRX, TRIM28 and ZNF274. Probably part of a corepressor complex containing ZNF304, TRIM28, SETDB1 and DNMT1. Interacts with TRIM28/TIF1B. Interacts with ATF7IP and ATF7IP2; the interaction with ATF7IP is required to stimulate histone methyltransferase activity and facilitate the conversion of dimethylated to trimethylated H3 'Lys-9'. Interacts with MBD1; interaction is abolished when MBD1 is sumoylated. Interacts with CBX1 and CBX5. Interacts with DNMT3A and DNMT3B. Interacts with SUMO2. Interacts with MPHOSPH8. Interacts with ERG. Interacts with HDAC1, HDAC2, SIN3A, SIN3B. Interacts with ATRX. Interacts with RESF1. Interacts with ZNF638. Interacts with TASOR. Interacts with ZNF263; recruited to the SIX3 promoter along with other proteins involved in chromatin modification and transcriptional corepression where it contributes to transcriptional repression. Interacts with PHF13; the interaction probably enhances SETDB1 chromatin-associated levels and activity. Interacts with VRK1. In terms of processing, degraded by the proteasome, shielded by interaction with ATF7IP. Post-translationally, monoubiquitinated at Lys-884 by E2 enzymes UBE2E family. The conjugated-Ub is protected from deubiquitination through the SET domain. Monoubiquitination at Lys-884 is required for catalytic activity and H3K9 methylation and endogenous retrovirus silencing. In terms of tissue distribution, ubiquitously expressed. Strong expression in liver and testis. Expressed in the brain, lungs, kidneys, uterus and seminal vesicles.

It localises to the nucleus. Its subcellular location is the chromosome. The catalysed reaction is N(6),N(6)-dimethyl-L-lysyl(9)-[histone H3] + S-adenosyl-L-methionine = N(6),N(6),N(6)-trimethyl-L-lysyl(9)-[histone H3] + S-adenosyl-L-homocysteine + H(+). Its function is as follows. Histone methyltransferase that specifically trimethylates 'Lys-9' of histone H3. H3 'Lys-9' trimethylation represents a specific tag for epigenetic transcriptional repression by recruiting HP1 (CBX1, CBX3 and/or CBX5) proteins to methylated histones. Mainly functions in euchromatin regions, thereby playing a central role in the silencing of euchromatic genes. H3 'Lys-9' trimethylation is coordinated with DNA methylation. Probably forms a complex with MBD1 and ATF7IP that represses transcription and couples DNA methylation and histone 'Lys-9' trimethylation. Its activity is dependent on MBD1 and is heritably maintained through DNA replication by being recruited by CAF-1. SETDB1 is targeted to histone H3 by TRIM28/TIF1B, a factor recruited by KRAB zinc-finger proteins. Probably forms a corepressor complex required for activated KRAS-mediated promoter hypermethylation and transcriptional silencing of tumor suppressor genes (TSGs) or other tumor-related genes in colorectal cancer (CRC) cells. Required to maintain a transcriptionally repressive state of genes in undifferentiated embryonic stem cells (ESCs). In ESCs, in collaboration with TRIM28, is also required for H3K9me3 and silencing of endogenous and introduced retroviruses in a DNA-methylation independent-pathway. Associates at promoter regions of tumor suppressor genes (TSGs) leading to their gene silencing. The SETDB1-TRIM28-ZNF274 complex may play a role in recruiting ATRX to the 3'-exons of zinc-finger coding genes with atypical chromatin signatures to establish or maintain/protect H3K9me3 at these transcriptionally active regions. This is Histone-lysine N-methyltransferase SETDB1 from Mus musculus (Mouse).